We begin with the raw amino-acid sequence, 581 residues long: MENLGFLIISTFLLLFTTLLPYSSASTTRRFHFNVEWKKVTRLCHTKQLLTVNGQYPGPTVAVHEGDIVEIKVTNRIAHNTTIHWHGLRQYRTGWADGPAYITQCPIRSKQSYTYRFKVEDQRGTLLWHAHHSWQRASVYGAFIIYPRQPYPFSGSHIQSEIPIILGEWWNDDVDNVEKAMMKTGAGAKVSDAYTLNGLPGPLYPCSTKDTFTATVDAGKTYILRIINAALNNELFVAVANHTLTVVEVDAVYTKPVHTKAIMIAPGQTTTLLLRADQLSGGEFLIAATPYVTSVFPFNNSTTVGFIRYTGKTKPENSVNTRRRRRLTAMSTVVALPNMLDTKFATKFSDSIKSLGSAKYPCKVPTKIDKRVITTISLNLQDCPLNQTCDGYAGKRFFASMNNISFVRPPISILESYYKKQSKGVFSLDFPEKPPNRFDFTGVDPVSENMNTEFGTKLFEVEFGSRLEIVFQGTSFLNIENHPLHVHGHNFFVVGRGFGNFDPEKDPKRYNLVDPPERNTFAVPTGGWAAIRINADNPGVWFIHCHLEQHTSWGLAMGFIVKDGPLPSQTLLPPPHDLPQC.

The signal sequence occupies residues 1-25 (MENLGFLIISTFLLLFTTLLPYSSA). Plastocyanin-like domains lie at 34-150 (NVEW…PRQP) and 161-312 (EIPI…YTGK). N-linked (GlcNAc...) asparagine glycosylation occurs at Asn-80. Positions 84, 86, 129, and 131 each coordinate Cu cation. N-linked (GlcNAc...) asparagine glycosylation is found at Asn-241, Asn-300, Asn-386, and Asn-403. Residues 429–565 (DFPEKPPNRF…AMGFIVKDGP (137 aa)) form the Plastocyanin-like 3 domain. Cu cation-binding residues include His-482, His-485, His-487, His-544, Cys-545, His-546, and His-550.

The protein belongs to the multicopper oxidase family. Cu cation serves as cofactor. As to expression, expressed in roots, stems and flowers.

The protein localises to the secreted. The protein resides in the extracellular space. Its subcellular location is the apoplast. The enzyme catalyses 4 hydroquinone + O2 = 4 benzosemiquinone + 2 H2O. In terms of biological role, lignin degradation and detoxification of lignin-derived products. This Arabidopsis thaliana (Mouse-ear cress) protein is Laccase-1 (LAC1).